Reading from the N-terminus, the 918-residue chain is von Willebrand factor A domain-containing protein DDB_G0292016 (918 aa).

The 129-residue stretch at 44-172 (KRCGLYSLKN…NVKVRVVISS (129 aa)) folds into the VIT domain. In terms of domain architecture, VWFA spans 299-467 (EFIFLIDCSG…NMEKQVMKLL (169 aa)). The tract at residues 625 to 814 (VDIMNQSPPI…PSAPSQQKSV (190 aa)) is disordered. Positions 650 to 690 (ASGALSSSILSRKRSSSPSTATKRSSSSSFSSSYLSLSSSS) are enriched in low complexity. The segment covering 716–746 (YESDGGDQSSEQDEEEEDDCDDFHEDLDEDL) has biased composition (acidic residues). Positions 752–774 (DVDKKECEKECKKKDSSKVDLKV) are enriched in basic and acidic residues. The segment covering 777–814 (SKVPLPSRSPSVSKPTTTSLLSPSPKSAPSAPSQQKSV) has biased composition (low complexity).

This is von Willebrand factor A domain-containing protein DDB_G0292016 from Dictyostelium discoideum (Social amoeba).